Here is a 730-residue protein sequence, read N- to C-terminus: Polyphosphate kinase (730 aa).

The span at 1–21 shows a compositional bias: basic and acidic residues; it reads MMRHDRNVTEIDAETRPDENL. The disordered stretch occupies residues 1–39; the sequence is MMRHDRNVTEIDAETRPDENLWHSGDSAVGAPPAATPAA. Residue Asn86 participates in ATP binding. Mg(2+) is bound by residues Arg423 and Arg453. Catalysis depends on His483, which acts as the Phosphohistidine intermediate. ATP-binding residues include Tyr516, Arg612, and His640.

The protein belongs to the polyphosphate kinase 1 (PPK1) family. Requires Mg(2+) as cofactor. An intermediate of this reaction is the autophosphorylated ppk in which a phosphate is covalently linked to a histidine residue through a N-P bond.

The catalysed reaction is [phosphate](n) + ATP = [phosphate](n+1) + ADP. Catalyzes the reversible transfer of the terminal phosphate of ATP to form a long-chain polyphosphate (polyP). The polypeptide is Polyphosphate kinase (Mycolicibacterium paratuberculosis (strain ATCC BAA-968 / K-10) (Mycobacterium paratuberculosis)).